A 387-amino-acid polypeptide reads, in one-letter code: 1-deoxy-D-xylulose 5-phosphate reductoisomerase (387 aa).

Thr10, Gly11, Ile13, Asn38, and Asn122 together coordinate NADPH. Lys123 is a 1-deoxy-D-xylulose 5-phosphate binding site. An NADPH-binding site is contributed by Glu124. Mn(2+) is bound at residue Asp148. The 1-deoxy-D-xylulose 5-phosphate site is built by Ser149, Glu150, Ser174, and His197. Glu150 is a binding site for Mn(2+). Gly203 contacts NADPH. Residues Ser210, Asn215, Lys216, and Glu219 each contribute to the 1-deoxy-D-xylulose 5-phosphate site. A Mn(2+)-binding site is contributed by Glu219.

This sequence belongs to the DXR family. It depends on Mg(2+) as a cofactor. Requires Mn(2+) as cofactor.

It carries out the reaction 2-C-methyl-D-erythritol 4-phosphate + NADP(+) = 1-deoxy-D-xylulose 5-phosphate + NADPH + H(+). Its pathway is isoprenoid biosynthesis; isopentenyl diphosphate biosynthesis via DXP pathway; isopentenyl diphosphate from 1-deoxy-D-xylulose 5-phosphate: step 1/6. In terms of biological role, catalyzes the NADPH-dependent rearrangement and reduction of 1-deoxy-D-xylulose-5-phosphate (DXP) to 2-C-methyl-D-erythritol 4-phosphate (MEP). The sequence is that of 1-deoxy-D-xylulose 5-phosphate reductoisomerase from Ehrlichia ruminantium (strain Gardel).